Reading from the N-terminus, the 319-residue chain is Cobalamin biosynthesis protein CobD (319 aa).

The next 4 membrane-spanning stretches (helical) occupy residues 56–76 (GLWI…LWLM), 153–173 (VDGV…LAMA), 204–224 (LANW…AWFI), and 290–310 (IPLS…LFAL).

It belongs to the CobD/CbiB family.

The protein localises to the cell membrane. It functions in the pathway cofactor biosynthesis; adenosylcobalamin biosynthesis. Its function is as follows. Converts cobyric acid to cobinamide by the addition of aminopropanol on the F carboxylic group. The protein is Cobalamin biosynthesis protein CobD of Photorhabdus laumondii subsp. laumondii (strain DSM 15139 / CIP 105565 / TT01) (Photorhabdus luminescens subsp. laumondii).